The following is a 1066-amino-acid chain: UPF0182 protein BL1029 (1066 aa).

A disordered region spans residues 12–74 (GNGGDSRRNN…KPASGGSGGS (63 aa)). The segment covering 44–61 (NAGPSGSSRPPRGPANPR) has biased composition (low complexity). 7 consecutive transmembrane segments (helical) span residues 77–97 (SKILIGVVLALAIIVGLFFGL), 126–146 (LWVAYALLMALTGFVSAWLAI), 179–199 (VAVVISLIVGVIFGSQFNANW), 235–255 (VLAAVAMLLGVGLVFSVVTHV), 282–302 (LGIWLMLNMFAWAVRQMIGVF), 326–346 (VTFIMAALTAILGVVLGIWLM), and 372–392 (VTSIAVVVVVGLVLTVAWPVL). Residues 977 to 1044 (DSGAAAGDAE…SQSAMKNGDW (68 aa)) are disordered. The segment covering 989–998 (SGDQSGSDTN) has biased composition (polar residues). The segment covering 1003-1016 (GTTDGKSDSGSSSD) has biased composition (low complexity).

This sequence belongs to the UPF0182 family.

Its subcellular location is the cell membrane. The sequence is that of UPF0182 protein BL1029 from Bifidobacterium longum (strain NCC 2705).